Here is a 98-residue protein sequence, read N- to C-terminus: Large ribosomal subunit protein bL28 (98 aa).

It belongs to the bacterial ribosomal protein bL28 family.

This chain is Large ribosomal subunit protein bL28, found in Thermus thermophilus (strain ATCC BAA-163 / DSM 7039 / HB27).